The chain runs to 139 residues: Small ribosomal subunit protein eS12 (139 aa).

Belongs to the eukaryotic ribosomal protein eS12 family. In terms of assembly, subunit of the 40S ribosomal complex. Part of the small subunit (SSU) processome, composed of more than 70 proteins and the RNA chaperone small nucleolar RNA (snoRNA) U3.

The protein resides in the nucleus. The protein localises to the nucleolus. Its function is as follows. Subunit of the 40S ribosomal complex. Part of the small subunit (SSU) processome, first precursor of the small eukaryotic ribosomal subunit. During the assembly of the SSU processome in the nucleolus, many ribosome biogenesis factors, an RNA chaperone and ribosomal proteins associate with the nascent pre-rRNA and work in concert to generate RNA folding, modifications, rearrangements and cleavage as well as targeted degradation of pre-ribosomal RNA by the RNA exosome. In wing imaginal disks, might have a role in translation rate, growth and cell competition, probably through regulation of Xrp1 expression. Might have a role in development and longevity. This is Small ribosomal subunit protein eS12 from Drosophila melanogaster (Fruit fly).